The chain runs to 201 residues: Small ribosomal subunit protein uS4c (201 aa).

The S4 RNA-binding domain occupies 89–149 (MRLDNILFRL…DKPKSGALIK (61 aa)).

The protein belongs to the universal ribosomal protein uS4 family. Part of the 30S ribosomal subunit. Contacts protein S5. The interaction surface between S4 and S5 is involved in control of translational fidelity.

It localises to the plastid. Its function is as follows. One of the primary rRNA binding proteins, it binds directly to 16S rRNA where it nucleates assembly of the body of the 30S subunit. With S5 and S12 plays an important role in translational accuracy. This Cuscuta exaltata (Tall dodder) protein is Small ribosomal subunit protein uS4c (rps4).